A 137-amino-acid polypeptide reads, in one-letter code: Proofreading thioesterase EntH (137 aa).

Catalysis depends on E63, which acts as the Nucleophile or proton acceptor.

Belongs to the thioesterase PaaI family. In terms of assembly, homotetramer. Dimer of dimers. Interacts specifically with the aryl carrier protein (ArCP) domain of EntB.

The protein resides in the cytoplasm. It functions in the pathway siderophore biosynthesis; enterobactin biosynthesis. Required for optimal enterobactin synthesis. Acts as a proofreading enzyme that prevents EntB misacylation by hydrolyzing the thioester bound existing between EntB and wrongly charged molecules. This chain is Proofreading thioesterase EntH, found in Cronobacter sakazakii (strain ATCC BAA-894) (Enterobacter sakazakii).